The sequence spans 1441 residues: ABC transporter G family member 51 (1441 aa).

The interval 52-71 is disordered; it reads VLPDPDGLGGGDGGGRGEGQ. Residues 58-69 are compositionally biased toward gly residues; that stretch reads GLGGGDGGGRGE. Residues 154-428 enclose the ABC transporter 1 domain; sequence LISSHLLRPD…FKSLGFSLPP (275 aa). An ATP-binding site is contributed by 187 to 194; the sequence is GPPASGKS. The ABC transmembrane type-2 1 domain occupies 505 to 718; it reads SLVRACFARE…AQRAVSVNEF (214 aa). 6 consecutive transmembrane segments (helical) span residues 523–543, 558–578, 615–635, 642–662, 668–688, and 751–771; these read FLYT…STLF, LYLA…FTEM, FIEA…APTV, MLLL…MGAI, IAST…GFVV, and FWIG…MFTL. Residues 838-1090 form the ABC transporter 2 domain; the sequence is MTFHNVNYYV…DMINYFQGIP (253 aa). 883 to 890 contributes to the ATP binding site; sequence GASGSGKT. The ABC transmembrane type-2 2 domain occupies 1163-1380; the sequence is TQFMVCLRKQ…TLRGVITSQL (218 aa). The next 7 helical transmembrane spans lie at 1184–1204, 1214–1234, 1271–1291, 1300–1320, 1330–1350, 1355–1375, and 1413–1433; these read VVRL…FWNV, ILLL…NNAS, VEIP…YFMV, LVLY…YGMV, MASV…GFLI, IPGW…LRGV, and ATVA…AISI.

It belongs to the ABC transporter superfamily. ABCG family. PDR (TC 3.A.1.205) subfamily.

The protein localises to the membrane. May be a general defense protein. In Oryza sativa subsp. japonica (Rice), this protein is ABC transporter G family member 51.